The sequence spans 875 residues: Translation initiation factor IF-2 (875 aa).

Disordered stretches follow at residues 123–204 (EKEK…EKPK) and 240–278 (ETKE…PVET). A compositionally biased stretch (basic and acidic residues) spans 240 to 252 (ETKEEKAELEALR). A compositionally biased stretch (basic residues) spans 259-268 (PKKKKKKKKK). The span at 269–278 (KEEEKAPVET) shows a compositional bias: basic and acidic residues. A tr-type G domain is found at 379–547 (ERPPVVTVMG…NILLVSEILE (169 aa)). Positions 388 to 395 (GHVDHGKT) are G1. 388–395 (GHVDHGKT) serves as a coordination point for GTP. A G2 region spans residues 413-417 (GITQH). Residues 435-438 (DTPG) are G3. GTP contacts are provided by residues 435–439 (DTPGH) and 489–492 (NKID). Positions 489-492 (NKID) are G4. A G5 region spans residues 525–527 (SAK).

This sequence belongs to the TRAFAC class translation factor GTPase superfamily. Classic translation factor GTPase family. IF-2 subfamily.

The protein localises to the cytoplasm. In terms of biological role, one of the essential components for the initiation of protein synthesis. Protects formylmethionyl-tRNA from spontaneous hydrolysis and promotes its binding to the 30S ribosomal subunits. Also involved in the hydrolysis of GTP during the formation of the 70S ribosomal complex. The chain is Translation initiation factor IF-2 from Persephonella marina (strain DSM 14350 / EX-H1).